A 710-amino-acid chain; its full sequence is Mitochondrial intermediate peptidase (710 aa).

A mitochondrion-targeting transit peptide spans 1–33; sequence MLLAAGTRYAYRLCGRRAAAALQGRAGRSCARS. At Lys-124 the chain carries N6-acetyllysine. His-492 lines the Zn(2+) pocket. Glu-493 is a catalytic residue. 2 residues coordinate Zn(2+): His-496 and His-499.

Belongs to the peptidase M3 family. In terms of assembly, monomer. Requires Zn(2+) as cofactor.

The protein resides in the mitochondrion matrix. It catalyses the reaction Release of an N-terminal octapeptide as second stage of processing of some proteins imported into the mitochondrion.. With respect to regulation, activity is divalent cation-dependent. It is stimulated by manganese, magnesium or calcium ions and reversibly inhibited by zinc, cobalt and iron. In terms of biological role, cleaves proteins, imported into the mitochondrion, to their mature size. This is Mitochondrial intermediate peptidase (Mipep) from Rattus norvegicus (Rat).